The following is a 176-amino-acid chain: Peptide methionine sulfoxide reductase MsrA (176 aa).

Cys-10 is an active-site residue.

This sequence belongs to the MsrA Met sulfoxide reductase family.

It catalyses the reaction L-methionyl-[protein] + [thioredoxin]-disulfide + H2O = L-methionyl-(S)-S-oxide-[protein] + [thioredoxin]-dithiol. The catalysed reaction is [thioredoxin]-disulfide + L-methionine + H2O = L-methionine (S)-S-oxide + [thioredoxin]-dithiol. Has an important function as a repair enzyme for proteins that have been inactivated by oxidation. Catalyzes the reversible oxidation-reduction of methionine sulfoxide in proteins to methionine. The sequence is that of Peptide methionine sulfoxide reductase MsrA from Sulfolobus acidocaldarius (strain ATCC 33909 / DSM 639 / JCM 8929 / NBRC 15157 / NCIMB 11770).